The following is a 186-amino-acid chain: Imidazole glycerol phosphate synthase subunit HisH (186 aa).

The 186-residue stretch at 1 to 186 (MIAIIDYGSG…KLLRNFGELA (186 aa)) folds into the Glutamine amidotransferase type-1 domain. Cys72 functions as the Nucleophile in the catalytic mechanism. Catalysis depends on residues His167 and Glu169.

Heterodimer of HisH and HisF.

The protein resides in the cytoplasm. The enzyme catalyses 5-[(5-phospho-1-deoxy-D-ribulos-1-ylimino)methylamino]-1-(5-phospho-beta-D-ribosyl)imidazole-4-carboxamide + L-glutamine = D-erythro-1-(imidazol-4-yl)glycerol 3-phosphate + 5-amino-1-(5-phospho-beta-D-ribosyl)imidazole-4-carboxamide + L-glutamate + H(+). It carries out the reaction L-glutamine + H2O = L-glutamate + NH4(+). Its pathway is amino-acid biosynthesis; L-histidine biosynthesis; L-histidine from 5-phospho-alpha-D-ribose 1-diphosphate: step 5/9. Functionally, IGPS catalyzes the conversion of PRFAR and glutamine to IGP, AICAR and glutamate. The HisH subunit catalyzes the hydrolysis of glutamine to glutamate and ammonia as part of the synthesis of IGP and AICAR. The resulting ammonia molecule is channeled to the active site of HisF. This chain is Imidazole glycerol phosphate synthase subunit HisH, found in Picrophilus torridus (strain ATCC 700027 / DSM 9790 / JCM 10055 / NBRC 100828 / KAW 2/3).